The sequence spans 430 residues: Enolase (430 aa).

Q167 provides a ligand contact to (2R)-2-phosphoglycerate. The Proton donor role is filled by E209. Mg(2+) is bound by residues D246, E287, and D314. The (2R)-2-phosphoglycerate site is built by K339, R368, S369, and K390. The Proton acceptor role is filled by K339.

The protein belongs to the enolase family. Mg(2+) serves as cofactor.

The protein localises to the cytoplasm. The protein resides in the secreted. It is found in the cell surface. The enzyme catalyses (2R)-2-phosphoglycerate = phosphoenolpyruvate + H2O. It functions in the pathway carbohydrate degradation; glycolysis; pyruvate from D-glyceraldehyde 3-phosphate: step 4/5. Catalyzes the reversible conversion of 2-phosphoglycerate (2-PG) into phosphoenolpyruvate (PEP). It is essential for the degradation of carbohydrates via glycolysis. The sequence is that of Enolase from Prochlorococcus marinus subsp. pastoris (strain CCMP1986 / NIES-2087 / MED4).